Consider the following 637-residue polypeptide: Threonine--tRNA ligase (637 aa).

The region spanning 1 to 61 is the TGS domain; sequence MLNITLPDGS…TEDSSVQIIT (61 aa). A catalytic region spans residues 242-533; it reads DHRKLGKQLD…LIENHAGSFP (292 aa). Cys-333, His-384, and His-510 together coordinate Zn(2+).

Belongs to the class-II aminoacyl-tRNA synthetase family. As to quaternary structure, homodimer. Zn(2+) serves as cofactor.

It localises to the cytoplasm. It catalyses the reaction tRNA(Thr) + L-threonine + ATP = L-threonyl-tRNA(Thr) + AMP + diphosphate + H(+). In terms of biological role, catalyzes the attachment of threonine to tRNA(Thr) in a two-step reaction: L-threonine is first activated by ATP to form Thr-AMP and then transferred to the acceptor end of tRNA(Thr). Also edits incorrectly charged L-seryl-tRNA(Thr). The chain is Threonine--tRNA ligase from Neisseria meningitidis serogroup C (strain 053442).